The sequence spans 315 residues: Ester hydrolase C11orf54 (315 aa).

The Zn(2+) site is built by histidine 266, histidine 268, and histidine 278.

In terms of assembly, monomer. Zn(2+) is required as a cofactor.

Its subcellular location is the nucleus. It localises to the cytoplasm. Its function is as follows. Exhibits ester hydrolase activity on the substrate p-nitrophenyl acetate, in vitro. Regulates DNA damage and repair by regulating HIF1A degradation via chaperone-mediated autophagy (CMA). Functionally, probably non-functional. In Homo sapiens (Human), this protein is Ester hydrolase C11orf54 (C11orf54).